The sequence spans 111 residues: UPF0122 protein CKR_1296 (111 aa).

Belongs to the UPF0122 family.

Its function is as follows. Might take part in the signal recognition particle (SRP) pathway. This is inferred from the conservation of its genetic proximity to ftsY/ffh. May be a regulatory protein. The chain is UPF0122 protein CKR_1296 from Clostridium kluyveri (strain NBRC 12016).